A 376-amino-acid chain; its full sequence is Acetylornithine aminotransferase (376 aa).

Residues 96-97 (GT) and F128 each bind pyridoxal 5'-phosphate. R131 contacts N(2)-acetyl-L-ornithine. 213 to 216 (DEVQ) contacts pyridoxal 5'-phosphate. Position 242 is an N6-(pyridoxal phosphate)lysine (K242). S270 provides a ligand contact to N(2)-acetyl-L-ornithine. T271 contacts pyridoxal 5'-phosphate.

This sequence belongs to the class-III pyridoxal-phosphate-dependent aminotransferase family. ArgD subfamily. Homodimer. The cofactor is pyridoxal 5'-phosphate.

It is found in the cytoplasm. The catalysed reaction is N(2)-acetyl-L-ornithine + 2-oxoglutarate = N-acetyl-L-glutamate 5-semialdehyde + L-glutamate. Its pathway is amino-acid biosynthesis; L-arginine biosynthesis; N(2)-acetyl-L-ornithine from L-glutamate: step 4/4. This Aquifex aeolicus (strain VF5) protein is Acetylornithine aminotransferase.